We begin with the raw amino-acid sequence, 87 residues long: Large ribosomal subunit protein eL20 (87 aa).

The protein belongs to the eukaryotic ribosomal protein eL20 family. Part of the 50S ribosomal subunit. Binds 23S rRNA.

The chain is Large ribosomal subunit protein eL20 from Staphylothermus marinus (strain ATCC 43588 / DSM 3639 / JCM 9404 / F1).